Reading from the N-terminus, the 359-residue chain is NAC transcription factor 47 (359 aa).

The NAC domain maps to 10–186; the sequence is LPPGFRFHPT…DWVLCRIYKK (177 aa). Residues 112–192 mediate DNA binding; the sequence is IGIKKALVFY…IYKKSHASLS (81 aa). 2 disordered regions span residues 147-166 and 200-226; these read KRIN…FGDR and TSNQ…LQND. Positions 148-165 are enriched in polar residues; sequence RINSSRSGGSEVNNNFGD.

It is found in the nucleus. Transcription factor that binds to the promoter of ACO5, an ACC oxidase involved in ethylene biosynthesis. Mediates waterlogging-induced hyponastic leaf movement, and cell expansion in abaxial cells of the basal petiole region, by directly regulating the expression of ACO5. Required for normal seed development and morphology. This Arabidopsis thaliana (Mouse-ear cress) protein is NAC transcription factor 47.